Here is a 118-residue protein sequence, read N- to C-terminus: CLAVATA3/ESR (CLE)-related protein 12 (118 aa).

The first 35 residues, 1–35 (MLRISSSSSMALKFSQILFIVLWLSLFFLLLHHLY), serve as a signal peptide directing secretion. Composition is skewed to basic and acidic residues over residues 75 to 91 (TPFHSRDNSRHNHRSGE) and 98 to 108 (IDPRYGVEKRR). Residues 75–118 (TPFHSRDNSRHNHRSGEQYDGDEIDPRYGVEKRRVPSGPNPLHH) form a disordered region. Pro110 and Pro113 each carry hydroxyproline. Residue Pro113 is glycosylated (O-linked (Ara...) hydroxyproline).

This sequence belongs to the CLV3/ESR signal peptide family. Post-translationally, the O-glycosylation (arabinosylation) of the hydroxyproline Pro-113 enhances binding affinity of the CLE12p peptide for its receptor. Mostly expressed in seedlings, roots, flowers, stems and apex, and, to a lower extent, in leaves and siliques.

Its subcellular location is the secreted. It localises to the extracellular space. Functionally, extracellular signal peptide that regulates cell fate. Represses root apical meristem maintenance. The polypeptide is CLAVATA3/ESR (CLE)-related protein 12 (Arabidopsis thaliana (Mouse-ear cress)).